A 444-amino-acid polypeptide reads, in one-letter code: N-succinylarginine dihydrolase (444 aa).

Substrate contacts are provided by residues 19–28 (SGLSFGNVAS), asparagine 110, and 137–138 (HR). The active site involves glutamate 174. Arginine 214 is a substrate binding site. Histidine 250 is a catalytic residue. Substrate-binding residues include aspartate 252 and asparagine 362. Catalysis depends on cysteine 368, which acts as the Nucleophile.

Belongs to the succinylarginine dihydrolase family. As to quaternary structure, homodimer.

It catalyses the reaction N(2)-succinyl-L-arginine + 2 H2O + 2 H(+) = N(2)-succinyl-L-ornithine + 2 NH4(+) + CO2. It functions in the pathway amino-acid degradation; L-arginine degradation via AST pathway; L-glutamate and succinate from L-arginine: step 2/5. Functionally, catalyzes the hydrolysis of N(2)-succinylarginine into N(2)-succinylornithine, ammonia and CO(2). This Photobacterium profundum (strain SS9) protein is N-succinylarginine dihydrolase.